An 87-amino-acid chain; its full sequence is U-scoloptoxin(23)-Er1a (87 aa).

A signal peptide spans 1–29; the sequence is MSLIVVRTHSFLFVLVLLLFASVFHSVDS. The segment at 32–54 is disordered; sequence FNPNGRYGRRDSASALSDASENK.

Belongs to the scoloptoxin-23 family. In terms of tissue distribution, expressed by the venom gland.

It is found in the secreted. This chain is U-scoloptoxin(23)-Er1a, found in Ethmostigmus rubripes (Giant centipede).